A 474-amino-acid chain; its full sequence is ATP synthase subunit beta (474 aa).

158 to 165 (GGAGVGKT) lines the ATP pocket.

The protein belongs to the ATPase alpha/beta chains family. As to quaternary structure, F-type ATPases have 2 components, CF(1) - the catalytic core - and CF(0) - the membrane proton channel. CF(1) has five subunits: alpha(3), beta(3), gamma(1), delta(1), epsilon(1). CF(0) has three main subunits: a(1), b(2) and c(9-12). The alpha and beta chains form an alternating ring which encloses part of the gamma chain. CF(1) is attached to CF(0) by a central stalk formed by the gamma and epsilon chains, while a peripheral stalk is formed by the delta and b chains.

It is found in the cell membrane. The enzyme catalyses ATP + H2O + 4 H(+)(in) = ADP + phosphate + 5 H(+)(out). Functionally, produces ATP from ADP in the presence of a proton gradient across the membrane. The catalytic sites are hosted primarily by the beta subunits. This chain is ATP synthase subunit beta, found in Tropheryma whipplei (strain Twist) (Whipple's bacillus).